Consider the following 360-residue polypeptide: Phospho-N-acetylmuramoyl-pentapeptide-transferase (360 aa).

A run of 10 helical transmembrane segments spans residues Ala26–Glu46, Met74–Gly94, Tyr97–Tyr117, Trp132–Ala152, Val168–Ser188, Gly199–Ser219, Ser236–Phe256, Val263–Leu283, Ile288–Val308, and Val338–Lys358.

This sequence belongs to the glycosyltransferase 4 family. MraY subfamily. Mg(2+) serves as cofactor.

Its subcellular location is the cell inner membrane. It carries out the reaction UDP-N-acetyl-alpha-D-muramoyl-L-alanyl-gamma-D-glutamyl-meso-2,6-diaminopimeloyl-D-alanyl-D-alanine + di-trans,octa-cis-undecaprenyl phosphate = di-trans,octa-cis-undecaprenyl diphospho-N-acetyl-alpha-D-muramoyl-L-alanyl-D-glutamyl-meso-2,6-diaminopimeloyl-D-alanyl-D-alanine + UMP. Its pathway is cell wall biogenesis; peptidoglycan biosynthesis. Its function is as follows. Catalyzes the initial step of the lipid cycle reactions in the biosynthesis of the cell wall peptidoglycan: transfers peptidoglycan precursor phospho-MurNAc-pentapeptide from UDP-MurNAc-pentapeptide onto the lipid carrier undecaprenyl phosphate, yielding undecaprenyl-pyrophosphoryl-MurNAc-pentapeptide, known as lipid I. This Shewanella sp. (strain ANA-3) protein is Phospho-N-acetylmuramoyl-pentapeptide-transferase.